Consider the following 330-residue polypeptide: Laforin (330 aa).

The region spanning 1 to 123 is the CBM20 domain; the sequence is MLFRFGVVVP…DNLVDGVYCL (123 aa). At Ser-25 the chain carries Phosphoserine; by AMPK. Substrate-binding positions include Trp-32, Lys-86, 102–106, Asp-196, Asp-234, and Arg-240; that span reads GPHHD. The region spanning 155–322 is the Tyrosine-protein phosphatase domain; that stretch reads HYSRILPNIW…QQDFSQKFGK (168 aa). The active-site Phosphocysteine intermediate is the Cys-265. A Glucan phosphatase signature motif CXAGXGR motif is present at residues 265 to 271; the sequence is CNAGVGR. Substrate contacts are provided by residues 266-271 and Tyr-303; that span reads NAGVGR.

This sequence belongs to the protein-tyrosine phosphatase family. In terms of assembly, homodimer. Interacts with PPP1R3B, PPP1R3C, HIRIP5, and EPM2AIP1. Binds glycogen and Lafora bodies. Interacts with NHLRC1/malin (via the NHL repeats). Forms a complex with NHLRC1/malin and HSP70. Interacts with PPP1R3D; in the presence of NHLC1/malin the interaction leads to ubiquitination and autophagic degradation of PPP1R3D. Interacts (via the phosphatase domain) with MAPT/Tau; the interaction dephosphorylates MAPT. Interacts with PRDM8. Polyubiquitinated by NHLRC1/malin. In terms of processing, phosphorylation on Ser-25 by AMPK affects the phosphatase activity of the enzyme and its ability to homodimerize and interact with NHLRC1, PPP1R3C or PRKAA2. Detected in skeletal muscle and in brain (at protein level). Widely expressed. Higher levels of expression are found in heart, brain, liver, skeletal muscle and kidney.

It localises to the cytoplasm. Its subcellular location is the endoplasmic reticulum membrane. The protein localises to the cell membrane. It carries out the reaction O-phospho-L-tyrosyl-[protein] + H2O = L-tyrosyl-[protein] + phosphate. It catalyses the reaction O-phospho-L-seryl-[protein] + H2O = L-seryl-[protein] + phosphate. The catalysed reaction is O-phospho-L-threonyl-[protein] + H2O = L-threonyl-[protein] + phosphate. In terms of biological role, plays an important role in preventing glycogen hyperphosphorylation and the formation of insoluble aggregates, via its activity as glycogen phosphatase, and by promoting the ubiquitination of proteins involved in glycogen metabolism via its interaction with the E3 ubiquitin ligase NHLRC1/malin. Dephosphorylates phosphotyrosine and synthetic substrates, such as para-nitrophenylphosphate (pNPP), and has low activity with phosphoserine and phosphothreonine substrates (in vitro). Has also been shown to dephosphorylate MAPT. Shows strong phosphatase activity towards complex carbohydrates in vitro, avoiding glycogen hyperphosphorylation which is associated with reduced branching and formation of insoluble aggregates. Forms a complex with NHLRC1/malin and HSP70, which suppresses the cellular toxicity of misfolded proteins by promoting their degradation through the ubiquitin-proteasome system (UPS). Acts as a scaffold protein to facilitate PPP1R3C/PTG ubiquitination by NHLRC1/malin. Also promotes proteasome-independent protein degradation through the macroautophagy pathway. This chain is Laforin (Epm2a), found in Mus musculus (Mouse).